We begin with the raw amino-acid sequence, 238 residues long: Ribonuclease PH (238 aa).

Phosphate contacts are provided by residues arginine 86 and 124–126 (GTR).

This sequence belongs to the RNase PH family. In terms of assembly, homohexameric ring arranged as a trimer of dimers.

The enzyme catalyses tRNA(n+1) + phosphate = tRNA(n) + a ribonucleoside 5'-diphosphate. Phosphorolytic 3'-5' exoribonuclease that plays an important role in tRNA 3'-end maturation. Removes nucleotide residues following the 3'-CCA terminus of tRNAs; can also add nucleotides to the ends of RNA molecules by using nucleoside diphosphates as substrates, but this may not be physiologically important. Probably plays a role in initiation of 16S rRNA degradation (leading to ribosome degradation) during starvation. This Klebsiella pneumoniae (strain 342) protein is Ribonuclease PH.